The chain runs to 345 residues: S-adenosylmethionine:tRNA ribosyltransferase-isomerase (345 aa).

It belongs to the QueA family. Monomer.

Its subcellular location is the cytoplasm. The catalysed reaction is 7-aminomethyl-7-carbaguanosine(34) in tRNA + S-adenosyl-L-methionine = epoxyqueuosine(34) in tRNA + adenine + L-methionine + 2 H(+). The protein operates within tRNA modification; tRNA-queuosine biosynthesis. Its function is as follows. Transfers and isomerizes the ribose moiety from AdoMet to the 7-aminomethyl group of 7-deazaguanine (preQ1-tRNA) to give epoxyqueuosine (oQ-tRNA). This is S-adenosylmethionine:tRNA ribosyltransferase-isomerase from Lactococcus lactis subsp. lactis (strain IL1403) (Streptococcus lactis).